Here is a 281-residue protein sequence, read N- to C-terminus: NADPH-dependent 7-cyano-7-deazaguanine reductase (281 aa).

Residue Ile-86–Ser-88 coordinates substrate. NADPH is bound at residue Ser-88–Lys-89. Cys-189 acts as the Thioimide intermediate in catalysis. The active-site Proton donor is Asp-196. Substrate is bound at residue His-228–Glu-229. Position 257–258 (Arg-257–Gly-258) interacts with NADPH.

Belongs to the GTP cyclohydrolase I family. QueF type 2 subfamily. Homodimer.

It is found in the cytoplasm. It catalyses the reaction 7-aminomethyl-7-carbaguanine + 2 NADP(+) = 7-cyano-7-deazaguanine + 2 NADPH + 3 H(+). It participates in tRNA modification; tRNA-queuosine biosynthesis. Functionally, catalyzes the NADPH-dependent reduction of 7-cyano-7-deazaguanine (preQ0) to 7-aminomethyl-7-deazaguanine (preQ1). This Mannheimia succiniciproducens (strain KCTC 0769BP / MBEL55E) protein is NADPH-dependent 7-cyano-7-deazaguanine reductase.